The chain runs to 245 residues: uncharacterized protein (245 aa).

6 consecutive transmembrane segments (helical) span residues 38-58, 68-88, 100-120, 129-149, 194-214, and 217-237; these read IYPA…AIFI, TIEL…QGYF, IWSL…LILA, VLFI…FVSA, VNNI…FLMN, and IAFI…LIIH.

Belongs to the acyltransferase 3 family.

The protein resides in the cell membrane. This is an uncharacterized protein from Haemophilus influenzae (strain ATCC 51907 / DSM 11121 / KW20 / Rd).